Consider the following 463-residue polypeptide: SPARC-related modular calcium-binding protein 1 (463 aa).

An N-terminal signal peptide occupies residues 1–25 (MLPARVRLLTPHLLLVLVQLSPAGG). In terms of domain architecture, Kazal-like spans 36–88 (SDRDPPCNPHCPRTQPKPICASDGRSYESMCEYQRAKCRDPALAVVHRGRCKD). Disulfide bonds link cysteine 42-cysteine 73, cysteine 46-cysteine 66, cysteine 55-cysteine 86, cysteine 94-cysteine 117, cysteine 128-cysteine 135, and cysteine 137-cysteine 157. One can recognise a Thyroglobulin type-1 1 domain in the interval 91-157 (QSKCRLERAQ…SSVQNKTPVC (67 aa)). An N-linked (GlcNAc...) asparagine glycan is attached at asparagine 224. In terms of domain architecture, Thyroglobulin type-1 2 spans 234-302 (VHSCDQERQS…TSTRYVMPSC (69 aa)). 3 disulfides stabilise this stretch: cysteine 237–cysteine 261, cysteine 272–cysteine 279, and cysteine 281–cysteine 302. 2 EF-hand domains span residues 369–404 (LEER…VKKK) and 406–441 (KPKK…SKEG). Residues aspartate 382, asparagine 384, serine 386, aspartate 388, glutamate 393, aspartate 419, asparagine 421, aspartate 423, and glutamate 430 each coordinate Ca(2+). Asparagine 384 carries N-linked (GlcNAc...) asparagine glycosylation.

In terms of processing, glycosylated. Widely expressed in many tissues with a strongest signal in ovary.

It localises to the secreted. The protein resides in the extracellular space. It is found in the extracellular matrix. The protein localises to the basement membrane. Functionally, probable regulator of osteoblast differentiation. Plays essential roles in both eye and limb development. In Mus musculus (Mouse), this protein is SPARC-related modular calcium-binding protein 1 (Smoc1).